Reading from the N-terminus, the 1055-residue chain is Activated CDC42 kinase 1 (1055 aa).

The SAM-like domain stretch occupies residues 1–110 (MQPEEGTGWL…PSPTPGSLPG (110 aa)). The disordered stretch occupies residues 91–110 (SQHSQSTFRKPSPTPGSLPG). At Thr113 the chain carries Phosphothreonine. A Protein kinase domain is found at 126–385 (LRLLEKLGDG…PTFVALRDFL (260 aa)). ATP-binding positions include 132 to 140 (LGDGSFGVV) and Lys158. The active-site Proton acceptor is the Asp252. Residue Tyr284 is modified to Phosphotyrosine; by SRC and autocatalysis. An SH3 domain is found at 388-448 (AQPTDMRALQ…PRNVVTSVAG (61 aa)). The CRIB domain occupies 454–466 (ISQPLQNSFIHTG). Positions 505–548 (RPTQHLGRVKREPPPRPPQPAIFTQKTTYDPVSEDPDPLSSDFK) are disordered. Phosphotyrosine is present on residues Pro518 and Tyr533. The required for interaction with SRC stretch occupies residues 638–667 (DWDARPLPPPPAYDDVAQDEDDFEVCSINS). Residues 647 to 650 (PPAY) are required for interaction with NEDD4. The interval 737-855 (TGQLTPSPTP…QVIQAPGPRA (119 aa)) is disordered. An EBD domain region spans residues 748–891 (GDDKPQVPPR…PYLERYQRFL (144 aa)). Pro residues-rich tracts occupy residues 753–764 (QVPPRVPIPPRP) and 787–798 (PASPPRVPPREP). Over residues 817 to 827 (PLPHRLSSSPG) the composition is skewed to low complexity. Tyr842 carries the post-translational modification Phosphotyrosine. At Arg854 the chain carries Omega-N-methylarginine. 2 positions are modified to phosphotyrosine: Tyr874 and Tyr887. At Ser896 the chain carries Phosphoserine. The segment at 896–952 (SPEEPAALPVPPLLPPPSTPAPAAPTATVRPMPQAAPDPKANFSTNNSNPGARPPSL) is disordered. Over residues 903 to 918 (LPVPPLLPPPSTPAPA) the composition is skewed to pro residues. A UBA domain is found at 973 to 1013 (PADKVQMLQAMVHGVTTEECQAALQSHSWSVQRAAQYLKVE).

Belongs to the protein kinase superfamily. Tyr protein kinase family. As to quaternary structure, homodimer. Interacts with CSPG4 (activated). Interacts with MERTK (activated); stimulates autophosphorylation. May interact (phosphorylated) with HSP90AB1; maintains kinase activity. Interacts with NPHP1. Interacts with SNX9 (via SH3 domain). Interacts with SRC (via SH2 and SH3 domain). Part of a collagen stimulated complex involved in cell migration composed of CDC42, CRK, TNK2 and BCAR1/p130cas. Interacts with BCAR1/p130cas via SH3 domains. Forms complexes with GRB2 and numerous receptor tyrosine kinases (RTK) including LTK, AXL or PDGFRL, in which GRB2 promotes RTK recruitment by TNK2. Interacts with CDC42. Interacts with EGFR, and this interaction is dependent on EGF stimulation and kinase activity of EGFR. Interacts (via kinase domain) with AKT1. Interacts with NEDD4 (via WW3 domain). NEDD4L and EGF promote association with NEDD4. Mg(2+) serves as cofactor. In terms of processing, autophosphorylation regulates kinase activity. Phosphorylation on Tyr-533 is required for interaction with SRC and is observed during association with clathrin-coated pits. Polyubiquitinated by NEDD4 and NEDD4L. Degradation can be induced by EGF and is lysosome-dependent. As to expression, ubiquitously present in all tissues tested. Highly expressed in the adult central nervous system (CNS); hippocampus, neocortex, and cerebellum, both at dendritic spines and presynaptic axon terminals. Levels are strongly increased during enhanced neural activity.

It localises to the cell membrane. Its subcellular location is the nucleus. It is found in the endosome. The protein resides in the cell junction. The protein localises to the adherens junction. It localises to the cytoplasmic vesicle membrane. Its subcellular location is the cytoplasmic vesicle. It is found in the clathrin-coated vesicle. The protein resides in the membrane. The protein localises to the clathrin-coated pit. It localises to the cytoplasm. Its subcellular location is the cytosol. It carries out the reaction L-tyrosyl-[protein] + ATP = O-phospho-L-tyrosyl-[protein] + ADP + H(+). The catalysed reaction is L-seryl-[protein] + ATP = O-phospho-L-seryl-[protein] + ADP + H(+). The enzyme catalyses L-threonyl-[protein] + ATP = O-phospho-L-threonyl-[protein] + ADP + H(+). Non-receptor tyrosine-protein and serine/threonine-protein kinase that is implicated in cell spreading and migration, cell survival, cell growth and proliferation. Transduces extracellular signals to cytosolic and nuclear effectors. Phosphorylates AKT1, AR, MCF2, WASL and WWOX. Implicated in trafficking and clathrin-mediated endocytosis through binding to epidermal growth factor receptor (EGFR) and clathrin. Binds to both poly- and mono-ubiquitin and regulates ligand-induced degradation of EGFR, thereby contributing to the accumulation of EGFR at the limiting membrane of early endosomes. Downstream effector of CDC42 which mediates CDC42-dependent cell migration via phosphorylation of BCAR1. May be involved both in adult synaptic function and plasticity and in brain development. Activates AKT1 by phosphorylating it on 'Tyr-176'. Phosphorylates AR on 'Tyr-267' and 'Tyr-363' thereby promoting its recruitment to androgen-responsive enhancers (AREs). Phosphorylates WWOX on 'Tyr-287'. Phosphorylates MCF2, thereby enhancing its activity as a guanine nucleotide exchange factor (GEF) toward Rho family proteins. Contributes to the control of AXL receptor levels. Confers metastatic properties on cancer cells and promotes tumor growth by negatively regulating tumor suppressor such as WWOX and positively regulating pro-survival factors such as AKT1 and AR. In Mus musculus (Mouse), this protein is Activated CDC42 kinase 1 (Tnk2).